Here is a 178-residue protein sequence, read N- to C-terminus: Transcription termination/antitermination protein NusG (178 aa).

The region spanning 130–159 (SVKVKEGPFANFIGTIEEIQLDKRKLKVHV) is the KOW domain.

It belongs to the NusG family.

Functionally, participates in transcription elongation, termination and antitermination. This is Transcription termination/antitermination protein NusG from Halalkalibacterium halodurans (strain ATCC BAA-125 / DSM 18197 / FERM 7344 / JCM 9153 / C-125) (Bacillus halodurans).